Consider the following 199-residue polypeptide: Fe/S biogenesis protein NfuA (199 aa).

[4Fe-4S] cluster-binding residues include Cys151 and Cys154.

It belongs to the NfuA family. In terms of assembly, homodimer. The cofactor is [4Fe-4S] cluster.

Its function is as follows. Involved in iron-sulfur cluster biogenesis. Binds a 4Fe-4S cluster, can transfer this cluster to apoproteins, and thereby intervenes in the maturation of Fe/S proteins. Could also act as a scaffold/chaperone for damaged Fe/S proteins. This is Fe/S biogenesis protein NfuA from Xylella fastidiosa (strain 9a5c).